A 732-amino-acid polypeptide reads, in one-letter code: mRNA-binding protein puf3 (732 aa).

The tract at residues 98-123 (PDSLVSTPTAPSANHHGNPFPNGKQS) is disordered. A compositionally biased stretch (polar residues) spans 100–109 (SLVSTPTAPS). Residues 376–716 (QQSRVLYLFH…HLIMSVERFR (341 aa)) enclose the PUM-HD domain. 8 Pumilio repeats span residues 396 to 431 (DILG…AVFQ), 432 to 468 (EIAS…ILLS), 469 to 504 (QIKG…QLIQ), 505 to 540 (ELDG…FILR), 541 to 576 (ALRP…IIEE), 577 to 611 (LLPH…YIFD), 612 to 647 (LMID…RILN), and 655 to 690 (ENCS…LLIS).

The protein belongs to the PUF3 family.

It is found in the mitochondrion outer membrane. It localises to the cytoplasm. RNA-binding protein involved in post-transcriptional regulation. Predominantly binds to mRNAs encoding mitochondrial proteins and localizes them to the vicinity of mitochondria for translation. Regulates mitochondrial biogenesis, motility and morphology. The protein is mRNA-binding protein puf3 (puf3) of Schizosaccharomyces pombe (strain 972 / ATCC 24843) (Fission yeast).